Reading from the N-terminus, the 190-residue chain is MIGRITGTLIEKLPPTICVDVNGLGYDIEVPMSTLYALPELGARVTLHTHLTVREDAHILYGFATAAERGAFRELIKVSGIGARTALSVLSGLSVSDLAQAITLQESGRLTRVPGIGKKTAERLLLEMRGKLGADIGATAHAVPDSQTDILNALLALGYSDKESQAALKKLPEGTGVSEGIRLALKALVR.

Positions 1 to 64 are domain I; it reads MIGRITGTLI…EDAHILYGFA (64 aa). Residues 65–137 are domain II; the sequence is TAAERGAFRE…MRGKLGADIG (73 aa). A flexible linker region spans residues 137–141; the sequence is GATAH. Residues 142–190 form a domain III region; the sequence is AVPDSQTDILNALLALGYSDKESQAALKKLPEGTGVSEGIRLALKALVR.

It belongs to the RuvA family. As to quaternary structure, homotetramer. Forms an RuvA(8)-RuvB(12)-Holliday junction (HJ) complex. HJ DNA is sandwiched between 2 RuvA tetramers; dsDNA enters through RuvA and exits via RuvB. An RuvB hexamer assembles on each DNA strand where it exits the tetramer. Each RuvB hexamer is contacted by two RuvA subunits (via domain III) on 2 adjacent RuvB subunits; this complex drives branch migration. In the full resolvosome a probable DNA-RuvA(4)-RuvB(12)-RuvC(2) complex forms which resolves the HJ.

The protein localises to the cytoplasm. Functionally, the RuvA-RuvB-RuvC complex processes Holliday junction (HJ) DNA during genetic recombination and DNA repair, while the RuvA-RuvB complex plays an important role in the rescue of blocked DNA replication forks via replication fork reversal (RFR). RuvA specifically binds to HJ cruciform DNA, conferring on it an open structure. The RuvB hexamer acts as an ATP-dependent pump, pulling dsDNA into and through the RuvAB complex. HJ branch migration allows RuvC to scan DNA until it finds its consensus sequence, where it cleaves and resolves the cruciform DNA. The chain is Holliday junction branch migration complex subunit RuvA from Bordetella petrii (strain ATCC BAA-461 / DSM 12804 / CCUG 43448).